A 136-amino-acid polypeptide reads, in one-letter code: Small ribosomal subunit protein uS9 (136 aa).

Belongs to the universal ribosomal protein uS9 family.

This is Small ribosomal subunit protein uS9 from Borreliella burgdorferi (strain ZS7) (Borrelia burgdorferi).